We begin with the raw amino-acid sequence, 181 residues long: UPF0232 protein MAP_0004 (181 aa).

The segment covering 1-11 (MSDDQSPSPSG) has biased composition (polar residues). Disordered stretches follow at residues 1–70 (MSDD…PQPL) and 161–181 (APSWRKGPRHIAGRGPRDTYG). Positions 18-39 (LVRRTLEEARAAARAQGKDAGR) are enriched in basic and acidic residues. Residues 40–50 (GRAAAPTPRRV) show a composition bias toward low complexity.

The protein belongs to the UPF0232 family.

In Mycolicibacterium paratuberculosis (strain ATCC BAA-968 / K-10) (Mycobacterium paratuberculosis), this protein is UPF0232 protein MAP_0004.